The chain runs to 366 residues: Peptide chain release factor 2 (366 aa).

Gln-251 is subject to N5-methylglutamine.

The protein belongs to the prokaryotic/mitochondrial release factor family. Methylated by PrmC. Methylation increases the termination efficiency of RF2.

It is found in the cytoplasm. Its function is as follows. Peptide chain release factor 2 directs the termination of translation in response to the peptide chain termination codons UGA and UAA. The polypeptide is Peptide chain release factor 2 (Campylobacter lari (strain RM2100 / D67 / ATCC BAA-1060)).